Here is a 728-residue protein sequence, read N- to C-terminus: Catalase-peroxidase (728 aa).

Positions 91 to 218 (WHSAGTYRTA…LAAVQMGLIY (128 aa)) form a cross-link, tryptophyl-tyrosyl-methioninium (Trp-Tyr) (with M-244). H92 functions as the Proton acceptor in the catalytic mechanism. The tryptophyl-tyrosyl-methioninium (Tyr-Met) (with W-91) cross-link spans 218–244 (YVNPEGPDGTPDPVAAAHDIRETFARM). H259 is a binding site for heme b.

The protein belongs to the peroxidase family. Peroxidase/catalase subfamily. As to quaternary structure, homodimer or homotetramer. Requires heme b as cofactor. Formation of the three residue Trp-Tyr-Met cross-link is important for the catalase, but not the peroxidase activity of the enzyme.

It carries out the reaction H2O2 + AH2 = A + 2 H2O. It catalyses the reaction 2 H2O2 = O2 + 2 H2O. Its function is as follows. Bifunctional enzyme with both catalase and broad-spectrum peroxidase activity. In Burkholderia lata (strain ATCC 17760 / DSM 23089 / LMG 22485 / NCIMB 9086 / R18194 / 383), this protein is Catalase-peroxidase.